A 446-amino-acid polypeptide reads, in one-letter code: MAGVTEGEDTKVIESKINELNIDKPKLEDNNEAKGNGNGNESGDDDDDDKEEDDDNEITEPSTSTASGDEKKKKNKNKKKKKKKIVSIDSSYPEGIFPEGQWMEYPLEDINSYRTTSEEKRYLDRQQNNKWQDFRKGAEIHRRVRHKAQSSIRPGMTMIEIANLIEDSVRNYSGNDHTLKAGIGFPTGLSLNHVAAHYTPNTGDKLILKKDDIMKVDIGVHVNGRICDSAFTMTFNEDGKYDTIMQAVKEATYTGIKESGIDVRLNDIGAAIQEVMESYEMEENGKTYPIKCIKNLNGHNIDDFVIHSGKSVPIIANGDMTKMEEGETFAIETFGSTGNGYVLPEGECSHYAMNKGVEHLKPPSERSKQLLETIKQNFGTLPWCRRYLERTGEEKYLFALNQLVRHGIVEEYPPIVDKRGSYTAQFEHTILLHPHKKEVVTKGDDY.

The disordered stretch occupies residues 1-85; sequence MAGVTEGEDT…KNKKKKKKKI (85 aa). The segment covering 8 to 32 has biased composition (basic and acidic residues); it reads EDTKVIESKINELNIDKPKLEDNNE. A compositionally biased stretch (acidic residues) spans 42 to 58; sequence SGDDDDDDKEEDDDNEI. Residues 73-85 are compositionally biased toward basic residues; sequence KKNKNKKKKKKKI. His-197 is a substrate binding site. Asp-217, Asp-228, and His-299 together coordinate a divalent metal cation. His-307 contacts substrate. Residues Glu-332 and Glu-427 each coordinate a divalent metal cation.

The protein belongs to the peptidase M24A family. Methionine aminopeptidase eukaryotic type 2 subfamily. Co(2+) serves as cofactor. The cofactor is Zn(2+). Requires Mn(2+) as cofactor. It depends on Fe(2+) as a cofactor.

Its subcellular location is the cytoplasm. The catalysed reaction is Release of N-terminal amino acids, preferentially methionine, from peptides and arylamides.. Cotranslationally removes the N-terminal methionine from nascent proteins. The N-terminal methionine is often cleaved when the second residue in the primary sequence is small and uncharged (Met-Ala-, Cys, Gly, Pro, Ser, Thr, or Val). The polypeptide is Methionine aminopeptidase 2 (Candida albicans (strain SC5314 / ATCC MYA-2876) (Yeast)).